Consider the following 126-residue polypeptide: Large ribosomal subunit protein bL12 (126 aa).

This sequence belongs to the bacterial ribosomal protein bL12 family. In terms of assembly, homodimer. Part of the ribosomal stalk of the 50S ribosomal subunit. Forms a multimeric L10(L12)X complex, where L10 forms an elongated spine to which 2 to 4 L12 dimers bind in a sequential fashion. Binds GTP-bound translation factors.

In terms of biological role, forms part of the ribosomal stalk which helps the ribosome interact with GTP-bound translation factors. Is thus essential for accurate translation. The sequence is that of Large ribosomal subunit protein bL12 from Prosthecochloris aestuarii (strain DSM 271 / SK 413).